Reading from the N-terminus, the 359-residue chain is MEFDKQFFSSVEKIVELAEQLEKDLNKPDLTFEQIKAINKELKHKQPLVVKFKEFKRLIDQALEAEAILENNELKELHDEAKKELERVRSVVPEYEEALKLLLLPIDENNQKNVIVELRPAAGGDESCIFLADLFNMYRNFCSNKGWKLQINEMIPSSVGLNFVSFEVNGVDVFAKLKFESGVHRVQRVPATESKGRVHTSTVTVAVLPQLEAVEVHINPADLRVDTYRASGAGGQHVNRTESAVRITHLPTGIVVSCQEGKSQFTNRDTAMKMLRAKLWEKAQNEQLSTQAGLRKSQVGSGDRAEKIRTYNYPQNRVTDHRIKLTVNKLNTIILGDLDEIIEALQADEKKQQLENFFS.

N5-methylglutamine is present on glutamine 236.

The protein belongs to the prokaryotic/mitochondrial release factor family. In terms of processing, methylated by PrmC. Methylation increases the termination efficiency of RF1.

The protein localises to the cytoplasm. In terms of biological role, peptide chain release factor 1 directs the termination of translation in response to the peptide chain termination codons UAG and UAA. In Mycoplasma pneumoniae (strain ATCC 29342 / M129 / Subtype 1) (Mycoplasmoides pneumoniae), this protein is Peptide chain release factor 1 (prfA).